The primary structure comprises 808 residues: Phospholipase D alpha 1 (808 aa).

Residues 1 to 125 form the C2 domain; the sequence is MSKVLLHGTL…LDGDEVDKWI (125 aa). Asp-186 lines the Ca(2+) pocket. Positions 326–364 constitute a PLD phosphodiesterase 1 domain; it reads TMFTHHQKIVVVDHELPRGGSQKRRVMSFVGGIDLCDGR. Catalysis depends on residues His-331, Lys-333, and Asp-338. Residue His-331 participates in a 1,2-diacyl-sn-glycero-3-phosphate binding. Residues His-370 and His-404 each coordinate Ca(2+). Gln-520 and His-659 together coordinate a 1,2-diacyl-sn-glycero-3-phosphate. A PLD phosphodiesterase 2 domain is found at 654–681; sequence FMIYVHSKMMIVDDEYIIVGSANINQRS. Active-site residues include His-659, Lys-661, and Asp-666. Position 720 (Glu-720) interacts with Ca(2+).

Belongs to the phospholipase D family. C2-PLD subfamily. In terms of assembly, interacts (via C2 domain) with CARDA (via RGD or KGE motifs). Ca(2+) serves as cofactor.

It catalyses the reaction a 1,2-diacyl-sn-glycero-3-phosphocholine + H2O = a 1,2-diacyl-sn-glycero-3-phosphate + choline + H(+). Hydrolyzes glycerol-phospholipids at the terminal phosphodiesteric bond. Plays an important role in various cellular processes. The sequence is that of Phospholipase D alpha 1 from Cynara cardunculus (Cardoon).